A 470-amino-acid chain; its full sequence is Diaminobutyrate--2-oxoglutarate aminotransferase (470 aa).

The residue at position 304 (K304) is an N6-(pyridoxal phosphate)lysine.

Belongs to the class-III pyridoxal-phosphate-dependent aminotransferase family. It depends on pyridoxal 5'-phosphate as a cofactor.

The enzyme catalyses L-2,4-diaminobutanoate + 2-oxoglutarate = L-aspartate 4-semialdehyde + L-glutamate. It functions in the pathway siderophore biosynthesis; rhizobactin biosynthesis. The polypeptide is Diaminobutyrate--2-oxoglutarate aminotransferase (rhbA) (Rhizobium meliloti (strain 1021) (Ensifer meliloti)).